The chain runs to 119 residues: V-type proton ATPase subunit F (119 aa).

It belongs to the V-ATPase F subunit family. V-ATPase is a heteromultimeric enzyme made up of two complexes: the ATP-hydrolytic V1 complex and the proton translocation V0 complex. The V1 complex consists of three catalytic AB heterodimers that form a heterohexamer, three peripheral stalks each consisting of EG heterodimers, one central rotor including subunits D and F, and the regulatory subunits C and H. The proton translocation complex V0 consists of the proton transport subunit a, a ring of proteolipid subunits c9c'', rotary subunit d, subunits e and f, and the accessory subunits ATP6AP1/Ac45 and ATP6AP2/PRR.

It is found in the cytoplasmic vesicle. The protein resides in the secretory vesicle. The protein localises to the synaptic vesicle membrane. Its subcellular location is the clathrin-coated vesicle membrane. Subunit of the V1 complex of vacuolar(H+)-ATPase (V-ATPase), a multisubunit enzyme composed of a peripheral complex (V1) that hydrolyzes ATP and a membrane integral complex (V0) that translocates protons. V-ATPase is responsible for acidifying and maintaining the pH of intracellular compartments and in some cell types, is targeted to the plasma membrane, where it is responsible for acidifying the extracellular environment. This is V-type proton ATPase subunit F (ATP6V1F) from Homo sapiens (Human).